Consider the following 574-residue polypeptide: Isocitrate dehydrogenase kinase/phosphatase (574 aa).

ATP is bound by residues 315–321 (APGIRGM) and Lys-336. Residue Asp-371 is part of the active site.

The protein belongs to the AceK family.

Its subcellular location is the cytoplasm. The enzyme catalyses L-seryl-[isocitrate dehydrogenase] + ATP = O-phospho-L-seryl-[isocitrate dehydrogenase] + ADP + H(+). Functionally, bifunctional enzyme which can phosphorylate or dephosphorylate isocitrate dehydrogenase (IDH) on a specific serine residue. This is a regulatory mechanism which enables bacteria to bypass the Krebs cycle via the glyoxylate shunt in response to the source of carbon. When bacteria are grown on glucose, IDH is fully active and unphosphorylated, but when grown on acetate or ethanol, the activity of IDH declines drastically concomitant with its phosphorylation. The chain is Isocitrate dehydrogenase kinase/phosphatase from Escherichia coli (strain SMS-3-5 / SECEC).